A 421-amino-acid polypeptide reads, in one-letter code: Inner membrane transport protein YdiN (421 aa).

Topologically, residues 1 to 9 are cytoplasmic; sequence MSQNKAFST. Residues 10-30 form a helical membrane-spanning segment; it reads PFILAVLCIYFSYFLHGISVI. The Periplasmic segment spans residues 31–49; that stretch reads TLAQNMSSLAEKFSTDNAG. A helical transmembrane segment spans residues 50–70; it reads IAYLISGIGLGRLISILFFGV. Residues 71-78 lie on the Cytoplasmic side of the membrane; sequence ISDKFGRR. Residues 79–99 traverse the membrane as a helical segment; the sequence is AVILMAVIMYLLFFFGIPACP. Asn-100 is a topological domain (periplasmic). A helical membrane pass occupies residues 101–121; that stretch reads LTLAYGLAVCVGIANSALDTG. Residues 122–136 are Cytoplasmic-facing; that stretch reads GYPALMECFPKASGS. The chain crosses the membrane as a helical span at residues 137 to 157; that stretch reads AVILVKAMVSFGQMFYPMLVS. Over 158-163 the chain is Periplasmic; that stretch reads YMLLNN. The chain crosses the membrane as a helical span at residues 164–184; sequence IWYGYGLIIPGILFVLITLML. Residues 185–215 lie on the Cytoplasmic side of the membrane; sequence LKSKFPSQLVDASVTNELPQMNSKPLVWLEG. The chain crosses the membrane as a helical span at residues 216–236; the sequence is VSSVLFGVAAFSTFYVIVVWM. Topologically, residues 237–251 are periplasmic; sequence PKYAMAFAGMSEAEA. A helical transmembrane segment spans residues 252–272; sequence LKTISYYSMGSLVCVFIFAAL. The Cytoplasmic portion of the chain corresponds to 273 to 279; sequence LKKMVRP. The helical transmembrane segment at 280–300 threads the bilayer; the sequence is IWANVFNSALATITAAIIYLY. The Periplasmic portion of the chain corresponds to 301-308; the sequence is PSPLVCNA. A helical transmembrane segment spans residues 309 to 329; that stretch reads GAFVIGFSAAGGILQLGVSVM. Over 330-342 the chain is Cytoplasmic; it reads SEFFPKSKAKVTS. The helical transmembrane segment at 343 to 363 threads the bilayer; sequence IYMMMGGLANFVIPLITGYLS. Residues 364 to 369 lie on the Periplasmic side of the membrane; it reads NIGLQY. The chain crosses the membrane as a helical span at residues 370–390; it reads IIVLDFTFALLALITAIIVFI. Over 391–421 the chain is Cytoplasmic; that stretch reads RYYRVFIIPENDVRFGERKFCTRLNTIKHRG.

The protein belongs to the major facilitator superfamily.

It localises to the cell inner membrane. This chain is Inner membrane transport protein YdiN (ydiN), found in Escherichia coli (strain K12).